The primary structure comprises 576 residues: Arginine--tRNA ligase (576 aa).

A 'HIGH' region motif is present at residues 122 to 132 (PNVAKQMHVGH).

The protein belongs to the class-I aminoacyl-tRNA synthetase family. As to quaternary structure, monomer.

The protein resides in the cytoplasm. The enzyme catalyses tRNA(Arg) + L-arginine + ATP = L-arginyl-tRNA(Arg) + AMP + diphosphate. The sequence is that of Arginine--tRNA ligase from Yersinia enterocolitica serotype O:8 / biotype 1B (strain NCTC 13174 / 8081).